Reading from the N-terminus, the 152-residue chain is Probable ribose-5-phosphate isomerase B (152 aa).

12 to 13 (DH) is a D-ribulose 5-phosphate binding site. Residue Cys70 is the Proton acceptor of the active site. 71–75 (GTGVG) provides a ligand contact to D-ribulose 5-phosphate. His103 (proton donor) is an active-site residue. Residues Asp104, Arg114, Arg137, and Arg141 each coordinate D-ribulose 5-phosphate.

The protein belongs to the LacAB/RpiB family. Homodimer.

It carries out the reaction aldehydo-D-ribose 5-phosphate = D-ribulose 5-phosphate. Its pathway is carbohydrate degradation; pentose phosphate pathway; D-ribose 5-phosphate from D-ribulose 5-phosphate (non-oxidative stage): step 1/1. Catalyzes the interconversion of ribulose-5-P and ribose-5-P. The polypeptide is Probable ribose-5-phosphate isomerase B (Mycoplasma pneumoniae (strain ATCC 29342 / M129 / Subtype 1) (Mycoplasmoides pneumoniae)).